Reading from the N-terminus, the 83-residue chain is Evasin P1124 (83 aa).

Residues 1–28 (MAVNVFTILQLAVFAAIVLNVNLHSVSA) form the signal peptide. Cystine bridges form between C48/C66, C52/C68, and C62/C79. N51 carries N-linked (GlcNAc...) asparagine glycosylation.

The protein resides in the secreted. Its function is as follows. Salivary chemokine-binding protein which binds to host chemokines CXCL1, CXCL2, CXCL3, CXCL5, CXCL6, CXCL12 and CXCL13. The chain is Evasin P1124 from Ixodes ricinus (Common tick).